The chain runs to 366 residues: UDP-N-acetylglucosamine--N-acetylmuramyl-(pentapeptide) pyrophosphoryl-undecaprenol N-acetylglucosamine transferase (366 aa).

Residues 22-24, Asn-134, Arg-170, Ser-198, Ile-253, and Gln-298 contribute to the UDP-N-acetyl-alpha-D-glucosamine site; that span reads TGG.

This sequence belongs to the glycosyltransferase 28 family. MurG subfamily.

It is found in the cell inner membrane. It carries out the reaction di-trans,octa-cis-undecaprenyl diphospho-N-acetyl-alpha-D-muramoyl-L-alanyl-D-glutamyl-meso-2,6-diaminopimeloyl-D-alanyl-D-alanine + UDP-N-acetyl-alpha-D-glucosamine = di-trans,octa-cis-undecaprenyl diphospho-[N-acetyl-alpha-D-glucosaminyl-(1-&gt;4)]-N-acetyl-alpha-D-muramoyl-L-alanyl-D-glutamyl-meso-2,6-diaminopimeloyl-D-alanyl-D-alanine + UDP + H(+). It participates in cell wall biogenesis; peptidoglycan biosynthesis. In terms of biological role, cell wall formation. Catalyzes the transfer of a GlcNAc subunit on undecaprenyl-pyrophosphoryl-MurNAc-pentapeptide (lipid intermediate I) to form undecaprenyl-pyrophosphoryl-MurNAc-(pentapeptide)GlcNAc (lipid intermediate II). The sequence is that of UDP-N-acetylglucosamine--N-acetylmuramyl-(pentapeptide) pyrophosphoryl-undecaprenol N-acetylglucosamine transferase from Xylella fastidiosa (strain M12).